Reading from the N-terminus, the 360-residue chain is DNA replication and repair protein RecF (360 aa).

An ATP-binding site is contributed by 30 to 37 (GQNGSGKT).

Belongs to the RecF family.

The protein localises to the cytoplasm. The RecF protein is involved in DNA metabolism; it is required for DNA replication and normal SOS inducibility. RecF binds preferentially to single-stranded, linear DNA. It also seems to bind ATP. The polypeptide is DNA replication and repair protein RecF (Shewanella sp. (strain MR-7)).